A 125-amino-acid polypeptide reads, in one-letter code: Major intrinsically disordered NOTCH2-binding receptor 1-like (125 aa).

N-linked (GlcNAc...) asparagine glycosylation occurs at Asn37. The chain crosses the membrane as a helical span at residues Phe100–Val120.

This sequence belongs to the MINAR family. Interacts with NOTCH2. Highly expressed in the auditory hair cells.

Its subcellular location is the lysosome membrane. The protein localises to the endoplasmic reticulum membrane. Binds cholesterol and may regulate the distribution and homeostasis of cholesterol in hair cells. May play a role in angiogenesis. This chain is Major intrinsically disordered NOTCH2-binding receptor 1-like, found in Danio rerio (Zebrafish).